We begin with the raw amino-acid sequence, 40 residues long: Natriuretic peptide PtNP-a (40 aa).

Cys9 and Cys25 are disulfide-bonded. Polar residues predominate over residues 17–34; that stretch reads ISNTSGMGCRNPIQNRPK. Residues 17–40 are disordered; it reads ISNTSGMGCRNPIQNRPKSTPGGS.

The protein belongs to the natriuretic peptide family. In terms of tissue distribution, expressed by the venom gland.

It is found in the secreted. In terms of biological role, snake venom natriuretic peptide that targets NPR1 and possibly NPR2. Exhibits hypotensive and vasodepressor activities. Recombinant PtNP-a demonstrates a dose-dependent stimulation of cGMP production via the natriuretic peptide receptor 1 (NPR1) (EC(50)=563 nM) in Madine Darby Canine Kidney (MDCK) cells. It also inhibits the angiotensin converting enzyme (ACE). This Pseudonaja textilis (Eastern brown snake) protein is Natriuretic peptide PtNP-a.